The primary structure comprises 142 residues: Large ribosomal subunit protein uL13c (142 aa).

This sequence belongs to the universal ribosomal protein uL13 family. As to quaternary structure, part of the 50S ribosomal subunit.

Its subcellular location is the plastid. The protein resides in the chloroplast. The sequence is that of Large ribosomal subunit protein uL13c from Porphyra purpurea (Red seaweed).